The sequence spans 61 residues: Small ribosomal subunit protein uS14 (61 aa).

Positions 24, 27, 40, and 43 each coordinate Zn(2+).

The protein belongs to the universal ribosomal protein uS14 family. Zinc-binding uS14 subfamily. As to quaternary structure, part of the 30S ribosomal subunit. Contacts proteins S3 and S10. Requires Zn(2+) as cofactor.

Its function is as follows. Binds 16S rRNA, required for the assembly of 30S particles and may also be responsible for determining the conformation of the 16S rRNA at the A site. The protein is Small ribosomal subunit protein uS14 of Dictyoglomus thermophilum (strain ATCC 35947 / DSM 3960 / H-6-12).